Consider the following 90-residue polypeptide: ATP synthase subunit c (90 aa).

2 consecutive transmembrane segments (helical) span residues 17–37 (PLAY…AGVV) and 70–90 (LAIV…IIFV).

It belongs to the ATPase C chain family. As to quaternary structure, F-type ATPases have 2 components, F(1) - the catalytic core - and F(0) - the membrane proton channel. F(1) has five subunits: alpha(3), beta(3), gamma(1), delta(1), epsilon(1). F(0) has three main subunits: a(1), b(2) and c(10-14). The alpha and beta chains form an alternating ring which encloses part of the gamma chain. F(1) is attached to F(0) by a central stalk formed by the gamma and epsilon chains, while a peripheral stalk is formed by the delta and b chains.

The protein localises to the cell membrane. Its function is as follows. F(1)F(0) ATP synthase produces ATP from ADP in the presence of a proton or sodium gradient. F-type ATPases consist of two structural domains, F(1) containing the extramembraneous catalytic core and F(0) containing the membrane proton channel, linked together by a central stalk and a peripheral stalk. During catalysis, ATP synthesis in the catalytic domain of F(1) is coupled via a rotary mechanism of the central stalk subunits to proton translocation. In terms of biological role, key component of the F(0) channel; it plays a direct role in translocation across the membrane. A homomeric c-ring of between 10-14 subunits forms the central stalk rotor element with the F(1) delta and epsilon subunits. The chain is ATP synthase subunit c from Metamycoplasma arthritidis (strain 158L3-1) (Mycoplasma arthritidis).